Here is a 443-residue protein sequence, read N- to C-terminus: Chromosomal replication initiator protein DnaA (443 aa).

Residues 1 to 67 (MDAWSRSLER…RELLAHFAGF (67 aa)) are domain I, interacts with DnaA modulators. The interval 67 to 105 (FSDVFLEIGSRPRPVEAQNAPVSTPSAHVSSEPQVPFAG) is domain II. The domain III, AAA+ region stretch occupies residues 106–323 (NLDNHYTFAN…GALNTLTARA (218 aa)). Glycine 151, glycine 153, lysine 154, and threonine 155 together coordinate ATP. Positions 324-443 (NFTGRAITTE…WDKLIRKLSE (120 aa)) are domain IV, binds dsDNA.

It belongs to the DnaA family. As to quaternary structure, oligomerizes as a right-handed, spiral filament on DNA at oriC.

The protein localises to the cytoplasm. Plays an essential role in the initiation and regulation of chromosomal replication. ATP-DnaA binds to the origin of replication (oriC) to initiate formation of the DNA replication initiation complex once per cell cycle. Binds the DnaA box (a 9 base pair repeat at the origin) and separates the double-stranded (ds)DNA. Forms a right-handed helical filament on oriC DNA; dsDNA binds to the exterior of the filament while single-stranded (ss)DNA is stabiized in the filament's interior. The ATP-DnaA-oriC complex binds and stabilizes one strand of the AT-rich DNA unwinding element (DUE), permitting loading of DNA polymerase. After initiation quickly degrades to an ADP-DnaA complex that is not apt for DNA replication. Binds acidic phospholipids. In Stenotrophomonas maltophilia (strain K279a), this protein is Chromosomal replication initiator protein DnaA.